The primary structure comprises 544 residues: Glutamyl-tRNA(Gln) amidotransferase subunit B, chloroplastic/mitochondrial (544 aa).

Belongs to the GatB/GatE family. GatB subfamily. As to quaternary structure, subunit of the heterotrimeric GatCAB amidotransferase (AdT) complex, composed of A, B and C subunits.

It is found in the mitochondrion. The protein resides in the plastid. It localises to the chloroplast. The enzyme catalyses L-glutamyl-tRNA(Gln) + L-glutamine + ATP + H2O = L-glutaminyl-tRNA(Gln) + L-glutamate + ADP + phosphate + H(+). In terms of biological role, allows the formation of correctly charged Gln-tRNA(Gln) through the transamidation of misacylated Glu-tRNA(Gln) in chloroplasts and mitochondria. The reaction takes place in the presence of glutamine and ATP through an activated gamma-phospho-Glu-tRNA(Gln). This chain is Glutamyl-tRNA(Gln) amidotransferase subunit B, chloroplastic/mitochondrial, found in Oryza sativa subsp. japonica (Rice).